We begin with the raw amino-acid sequence, 140 residues long: MANSASGMHVSDECKLKFLELKAKRNYRFIVFKIDEKAQQVMIDKLGNPEETYEDFTRSIPEDECRYAVYDYDFTTPENCQKSKIFFIAWSPDTSRVRSKMLYASSKDRFKRELDGIQVELQATDPSEMSLDIIKGRVNL.

Phosphoserine is present on serine 6. The ADF-H domain occupies 7–139 (GMHVSDECKL…SLDIIKGRVN (133 aa)).

Belongs to the actin-binding proteins ADF family.

It localises to the cytoplasm. It is found in the cytoskeleton. Its function is as follows. Actin-depolymerizing protein. Severs actin filaments (F-actin) and binds to actin monomers. The sequence is that of Actin-depolymerizing factor 10 (ADF10) from Arabidopsis thaliana (Mouse-ear cress).